Reading from the N-terminus, the 230-residue chain is Dephospho-CoA kinase (230 aa).

Residues 1–20 (MSKYAAIPSPYSHQPQAPDH) are disordered. Residues 26–225 (VVGLTGGIGS…QDYLKLAQQL (200 aa)) enclose the DPCK domain. 34 to 39 (GSGKSA) lines the ATP pocket.

This sequence belongs to the CoaE family.

The protein localises to the cytoplasm. It catalyses the reaction 3'-dephospho-CoA + ATP = ADP + CoA + H(+). The protein operates within cofactor biosynthesis; coenzyme A biosynthesis; CoA from (R)-pantothenate: step 5/5. In terms of biological role, catalyzes the phosphorylation of the 3'-hydroxyl group of dephosphocoenzyme A to form coenzyme A. The protein is Dephospho-CoA kinase of Psychrobacter arcticus (strain DSM 17307 / VKM B-2377 / 273-4).